Reading from the N-terminus, the 260-residue chain is Transmembrane protein 106C (260 aa).

Gly-2 carries the N-myristoyl glycine lipid modification. The chain crosses the membrane as a helical span at residues Tyr-85–Phe-105. Asn-184 carries an N-linked (GlcNAc...) asparagine glycan. A helical membrane pass occupies residues Ser-196–Met-216.

The protein belongs to the TMEM106 family. As to quaternary structure, interacts with TMEM106B.

It is found in the endoplasmic reticulum membrane. The protein resides in the membrane. The polypeptide is Transmembrane protein 106C (Tmem106c) (Mus musculus (Mouse)).